A 616-amino-acid chain; its full sequence is Dihydroxy-acid dehydratase 1 (616 aa).

A Mg(2+)-binding site is contributed by Asp-81. Cys-122 contributes to the [2Fe-2S] cluster binding site. The Mg(2+) site is built by Asp-123 and Lys-124. Lys-124 is subject to N6-carboxylysine. Residue Cys-195 participates in [2Fe-2S] cluster binding. Glu-491 contributes to the Mg(2+) binding site. Ser-517 (proton acceptor) is an active-site residue.

The protein belongs to the IlvD/Edd family. In terms of assembly, homodimer. It depends on [2Fe-2S] cluster as a cofactor. Mg(2+) serves as cofactor.

The enzyme catalyses (2R)-2,3-dihydroxy-3-methylbutanoate = 3-methyl-2-oxobutanoate + H2O. It carries out the reaction (2R,3R)-2,3-dihydroxy-3-methylpentanoate = (S)-3-methyl-2-oxopentanoate + H2O. Its pathway is amino-acid biosynthesis; L-isoleucine biosynthesis; L-isoleucine from 2-oxobutanoate: step 3/4. The protein operates within amino-acid biosynthesis; L-valine biosynthesis; L-valine from pyruvate: step 3/4. Its function is as follows. Functions in the biosynthesis of branched-chain amino acids. Catalyzes the dehydration of (2R,3R)-2,3-dihydroxy-3-methylpentanoate (2,3-dihydroxy-3-methylvalerate) into 2-oxo-3-methylpentanoate (2-oxo-3-methylvalerate) and of (2R)-2,3-dihydroxy-3-methylbutanoate (2,3-dihydroxyisovalerate) into 2-oxo-3-methylbutanoate (2-oxoisovalerate), the penultimate precursor to L-isoleucine and L-valine, respectively. The polypeptide is Dihydroxy-acid dehydratase 1 (Bradyrhizobium diazoefficiens (strain JCM 10833 / BCRC 13528 / IAM 13628 / NBRC 14792 / USDA 110)).